A 354-amino-acid chain; its full sequence is Arginase-2, mitochondrial (354 aa).

The transit peptide at 1-22 (MFLRSSVSRLLHGQIPCALTRS) directs the protein to the mitochondrion. 4 residues coordinate Mn(2+): His-120, Asp-143, His-145, and Asp-147. Residues 145 to 149 (HADIN), 156 to 158 (SGN), and Glu-202 each bind substrate. Residues Asp-251 and Asp-253 each coordinate Mn(2+). Positions 265 and 296 each coordinate substrate.

Belongs to the arginase family. In terms of assembly, homotrimer. Requires Mn(2+) as cofactor.

Its subcellular location is the mitochondrion. It carries out the reaction L-arginine + H2O = urea + L-ornithine. It participates in nitrogen metabolism; urea cycle; L-ornithine and urea from L-arginine: step 1/1. In terms of biological role, may play a role in the regulation of extra-urea cycle arginine metabolism and also in down-regulation of nitric oxide synthesis. Extrahepatic arginase functions to regulate L-arginine bioavailability to nitric oxid synthase (NOS). Arginine metabolism is a critical regulator of innate and adaptive immune responses. Seems to be involved in negative regulation of the survival capacity of activated T cells. May suppress inflammation-related signaling in asthmatic airway epithelium. May play a role in promoting prenatal immune suppression. Regulates RPS6KB1 signaling, which promotes endothelial cell senescence and inflammation and implicates NOS3/eNOS dysfunction. Can inhibit endothelial autophagy independently of its enzymatic activity implicating mTORC2 signaling. Involved in vascular smooth muscle cell senescence and apoptosis independently of its enzymatic activity. This is Arginase-2, mitochondrial (Arg2) from Rattus norvegicus (Rat).